A 206-amino-acid polypeptide reads, in one-letter code: Ribosomal RNA small subunit methyltransferase G (206 aa).

S-adenosyl-L-methionine-binding positions include Gly73, Leu78, Val124–Glu125, and Arg139.

It belongs to the methyltransferase superfamily. RNA methyltransferase RsmG family.

It is found in the cytoplasm. The catalysed reaction is guanosine(527) in 16S rRNA + S-adenosyl-L-methionine = N(7)-methylguanosine(527) in 16S rRNA + S-adenosyl-L-homocysteine. Specifically methylates the N7 position of guanine in position 527 of 16S rRNA. This Yersinia enterocolitica serotype O:8 / biotype 1B (strain NCTC 13174 / 8081) protein is Ribosomal RNA small subunit methyltransferase G.